The primary structure comprises 435 residues: Putative dimethyl sulfoxide reductase membrane subunit C (435 aa).

Helical transmembrane passes span 22 to 42, 57 to 77, 95 to 115, 135 to 155, 186 to 206, 220 to 240, 257 to 277, 281 to 301, 304 to 324, 333 to 353, and 392 to 412; these read GWLGVLALLLVIGLGAWAYQL, WGLYIMLFVLFVGLSAGGLIL, LGVLVSLGCIIVAGLLILPDI, VWDFGIVMLYGALNVWYLWLL, FWTAVCALPAAVALHSVTGWI, LVAPVFIAKALVSGLGLLLVV, LTSLGKLLGIFLAFHVVYLLA, LPHAWAHHFGFWAITSNFLIG, VYFWLWTGLGGAVPLLLLATP, IFTASVLAVFGTLFEGIRLVF, and VEIAVTVGVISIGALIVMAGL.

This sequence belongs to the NrfD family. In terms of assembly, probable multiprotein complex that likely consists of DmsA, DmsB and DmsC.

Its subcellular location is the cell membrane. Its function is as follows. Dimethyl sulfoxide (DMSO) reductase catalyzes the reduction of dimethyl sulfoxide (DMSO) to dimethyl sulfide (DMS) during anaerobic respiration; it can also use trimethylamine N-oxide (TMAO) as terminal electron acceptor. Subunit C is proposed to be a membrane anchoring subunit. The sequence is that of Putative dimethyl sulfoxide reductase membrane subunit C (dmsC) from Halobacterium salinarum (strain ATCC 700922 / JCM 11081 / NRC-1) (Halobacterium halobium).